The sequence spans 538 residues: Bifunctional purine biosynthesis protein PurH (538 aa).

The MGS-like domain maps to 6–158 (KHIPAPDLHR…KNHAYVATVV (153 aa)).

This sequence belongs to the PurH family.

The enzyme catalyses (6R)-10-formyltetrahydrofolate + 5-amino-1-(5-phospho-beta-D-ribosyl)imidazole-4-carboxamide = 5-formamido-1-(5-phospho-D-ribosyl)imidazole-4-carboxamide + (6S)-5,6,7,8-tetrahydrofolate. It carries out the reaction IMP + H2O = 5-formamido-1-(5-phospho-D-ribosyl)imidazole-4-carboxamide. It participates in purine metabolism; IMP biosynthesis via de novo pathway; 5-formamido-1-(5-phospho-D-ribosyl)imidazole-4-carboxamide from 5-amino-1-(5-phospho-D-ribosyl)imidazole-4-carboxamide (10-formyl THF route): step 1/1. Its pathway is purine metabolism; IMP biosynthesis via de novo pathway; IMP from 5-formamido-1-(5-phospho-D-ribosyl)imidazole-4-carboxamide: step 1/1. In Brucella ovis (strain ATCC 25840 / 63/290 / NCTC 10512), this protein is Bifunctional purine biosynthesis protein PurH.